A 67-amino-acid chain; its full sequence is Medusin-PT (67 aa).

Residues 1–22 (MAFLKKSLFLVFFLGFVSLSIC) form the signal peptide. The propeptide occupies 23–48 (EEEKRETDEKENEQEDDREERSEEKR). The interval 25-46 (EKRETDEKENEQEDDREERSEE) is disordered. Acidic residues predominate over residues 31–40 (EKENEQEDDR). Leu66 is subject to Leucine amide.

This sequence belongs to the frog skin active peptide (FSAP) family. Medusin subfamily. In the synthetic mutant medusin-PT1a [T58K], the Leu-50 has been modified in a D-amino acid. In medusin-PT1a, there is an increase in antimicrobial activity, and an increase in hemolytic activity. It is more potent against S.aureus and gains activity against MRSA, E.faecalis, E.coli, P.aeruginosa and C.albicans. There is an important increase in both biofilm inhibition and biofilm eradication. Expressed by the skin glands.

It localises to the secreted. The protein localises to the target cell membrane. Its function is as follows. Antimicrobial peptide with activity against Gram-positive bacteria S.epidermidis ATCC 12228 (MIC=50 uM) and S.aureus (MIC=64 ug/ml and MBC=128 ug/ml). Not active against some Gram-positive bacteria (methicillin-resistant S.aureus (MRSA), E.faecalis), Gram-negative bacterium E.coli ATCC 25922 and fungus C.albicans at concentrations up to 100 uM. Can only slightly inhibit the formation of biofilm by S.aureus (minimal biofilm inhibitionconcentration MBIC=512 ug/ml, minimal biofilm eradication concentration MBEC&gt;512 ug/ml). Has an anti-inflammatory effect, since it inhibits the production of the pro-inflammatory cytokines TNF-alpha and IL-1beta. Has high activity of stimulation of insulin release, which may protect the species from being eaten by predators by causing fatal hypoglycemia. Is not cytotoxic to cancer line cells. Shows very low hemolysis on horse erythrocytes and moderate hemolysis on mouse erythrocytes. The protein is Medusin-PT of Phyllomedusa tarsius (Brownbelly leaf frog).